The primary structure comprises 187 residues: Elongation factor P (187 aa).

The protein belongs to the elongation factor P family.

Its subcellular location is the cytoplasm. Its pathway is protein biosynthesis; polypeptide chain elongation. Functionally, involved in peptide bond synthesis. Stimulates efficient translation and peptide-bond synthesis on native or reconstituted 70S ribosomes in vitro. Probably functions indirectly by altering the affinity of the ribosome for aminoacyl-tRNA, thus increasing their reactivity as acceptors for peptidyl transferase. The chain is Elongation factor P from Paenarthrobacter aurescens (strain TC1).